The sequence spans 37 residues: Large ribosomal subunit protein bL36 (37 aa).

Belongs to the bacterial ribosomal protein bL36 family.

This Prochlorococcus marinus (strain MIT 9313) protein is Large ribosomal subunit protein bL36.